A 472-amino-acid chain; its full sequence is Ras-GEF domain-containing family member 1B (472 aa).

The 131-residue stretch at 34 to 164 folds into the N-terminal Ras-GEF domain; sequence QDNNLLSGSL…IIQNLIRKLA (131 aa). One can recognise a Ras-GEF domain in the interval 204–452; sequence DPYTVAQQLT…YLASYESEGP (249 aa).

Guanine nucleotide exchange factor (GEF) with specificity for rap2a and other Ras family proteins (in vitro). This chain is Ras-GEF domain-containing family member 1B (rasgef1b), found in Xenopus tropicalis (Western clawed frog).